Here is a 54-residue protein sequence, read N- to C-terminus: Rubredoxin (54 aa).

Met-1 is subject to N-formylmethionine. The 54-residue stretch at 1-54 (MKKYTCTVCGYIYNPEDGDPDNGVNPGTDFKDIPDDWVCPLCGVGKDQFEEVEE) folds into the Rubredoxin-like domain. 4 residues coordinate Fe cation: Cys-6, Cys-9, Cys-39, and Cys-42.

Belongs to the rubredoxin family. It depends on Fe(3+) as a cofactor.

Rubredoxin is a small nonheme, iron protein lacking acid-labile sulfide. Its single Fe, chelated to 4 Cys, functions as an electron acceptor and may also stabilize the conformation of the molecule. The sequence is that of Rubredoxin from Clostridium pasteurianum.